The following is a 119-amino-acid chain: Hydrogenase maturation factor HypA (119 aa).

His2 contacts Ni(2+). 4 residues coordinate Zn(2+): Cys73, Cys76, Cys89, and Cys92.

This sequence belongs to the HypA/HybF family.

In terms of biological role, involved in the maturation of [NiFe] hydrogenases. Required for nickel insertion into the metal center of the hydrogenase. In Dehalococcoides mccartyi (strain CBDB1), this protein is Hydrogenase maturation factor HypA.